Reading from the N-terminus, the 140-residue chain is MSSMTQNLREVMKVMFKVPGFDRVLEKVTLVSAAPEKLICEMKVEEQHTNKLGTLHGGLTATLVDSISTMALMCTERGAPGVSVDMNITYMSPAKIGEEIVITAHILKQGKTLAFASVDLTNKTTGKLIAQGRHTKHLGN.

At methionine 1 the chain carries N-acetylmethionine. N6-acetyllysine is present on residues lysine 27, lysine 37, and lysine 43. Glutamate 46 serves as a coordination point for CoA. Asparagine 50 and glycine 81 together coordinate substrate. CoA contacts are provided by residues serine 83, 90-95 (YMSPAK), and 108-113 (KQGKTL). 2 positions are modified to N6-acetyllysine: lysine 108 and lysine 127. Residue histidine 137 coordinates CoA.

The protein belongs to the thioesterase PaaI family. As to quaternary structure, homotetramer. Interacts with PCTP. As to expression, highly expressed in the kidney and moderately in the heart, liver, brain, small and large intestine. Also expressed in brown adipose tissue.

Its subcellular location is the cytoplasm. The protein resides in the cytosol. It localises to the mitochondrion. The protein localises to the nucleus. It is found in the cytoskeleton. Its subcellular location is the spindle. It catalyses the reaction a fatty acyl-CoA + H2O = a fatty acid + CoA + H(+). The enzyme catalyses decanoyl-CoA + H2O = decanoate + CoA + H(+). The catalysed reaction is octanoyl-CoA + H2O = octanoate + CoA + H(+). It carries out the reaction butanoyl-CoA + H2O = butanoate + CoA + H(+). It catalyses the reaction hexanoyl-CoA + H2O = hexanoate + CoA + H(+). The enzyme catalyses tetradecanoyl-CoA + H2O = tetradecanoate + CoA + H(+). The catalysed reaction is hexadecanoyl-CoA + H2O = hexadecanoate + CoA + H(+). It carries out the reaction dodecanoyl-CoA + H2O = dodecanoate + CoA + H(+). It catalyses the reaction (9Z)-octadecenoyl-CoA + H2O = (9Z)-octadecenoate + CoA + H(+). In terms of biological role, catalyzes the hydrolysis of acyl-CoAs into free fatty acids and coenzyme A (CoASH), regulating their respective intracellular levels. Has acyl-CoA thioesterase activity towards medium (C12) and long-chain (C18) fatty acyl-CoA substrates. Can also hydrolyze 3-hydroxyphenylacetyl-CoA and 3,4-dihydroxyphenylacetyl-CoA (in vitro). May play a role in controlling adaptive thermogenesis. The sequence is that of Acyl-coenzyme A thioesterase 13 from Mus musculus (Mouse).